The chain runs to 409 residues: Putative competence-damage inducible protein (409 aa).

The protein belongs to the CinA family.

This Clostridium botulinum (strain Langeland / NCTC 10281 / Type F) protein is Putative competence-damage inducible protein.